Reading from the N-terminus, the 290-residue chain is Phosphoribulokinase (290 aa).

12 to 20 (GSSGAGTTS) lines the ATP pocket.

This sequence belongs to the phosphoribulokinase family.

The catalysed reaction is D-ribulose 5-phosphate + ATP = D-ribulose 1,5-bisphosphate + ADP + H(+). The protein operates within carbohydrate biosynthesis; Calvin cycle. This chain is Phosphoribulokinase (cbbP), found in Nitrobacter vulgaris.